We begin with the raw amino-acid sequence, 423 residues long: G-protein coupled receptor 83 (423 aa).

Positions 1-16 are cleaved as a signal peptide; it reads MVPHLLLLCLLPLVRA. Residues 18–71 lie on the Extracellular side of the membrane; that stretch reads EPHEGRADEQSAEAALAVPNASHFFSWNNYTFSDWQNFVGRRRYGAESQNPTVK. N37 and N46 each carry an N-linked (GlcNAc...) asparagine glycan. A helical membrane pass occupies residues 72–92; it reads ALLIVAYSFIIVFSLFGNVLV. Residues 93 to 107 are Cytoplasmic-facing; that stretch reads CHVIFKNQRMHSATS. Residues 108 to 129 form a helical membrane-spanning segment; it reads LFIVNLAVADIMITLLNTPFTL. The Extracellular segment spans residues 130–145; it reads VRFVNSTWIFGKGMCH. N134 carries an N-linked (GlcNAc...) asparagine glycan. A disulfide bridge links C144 with C224. A helical transmembrane segment spans residues 146–167; the sequence is VSRFAQYCSLHVSALTLTAIAV. At 168 to 186 the chain is on the cytoplasmic side; it reads DRHQVIMHPLKPRISITKG. The helical transmembrane segment at 187 to 208 threads the bilayer; it reads VIYIAVIWTMATFFSLPHAICQ. At 209–238 the chain is on the extracellular side; sequence KLFTFKYSEDIVRSLCLPDFPEPADLFWKY. Residues 239-260 traverse the membrane as a helical segment; sequence LDLATFILLYILPLLIISVAYA. Over 261-293 the chain is Cytoplasmic; it reads RVAKKLWLCNMIGDVTTEQYFALRRKKKKTIKM. A helical membrane pass occupies residues 294–315; that stretch reads LMLVVVLFALCWFPLNCYVLLL. Topologically, residues 316–327 are extracellular; sequence SSKVIRTNNALY. The helical transmembrane segment at 328–348 threads the bilayer; it reads FAFHWFAMSSTCYNPFIYCWL. The Cytoplasmic segment spans residues 349–423; the sequence is NENFRIELKA…SSVEPIVTMS (75 aa). Positions 402–414 are enriched in polar residues; it reads PTSQLQSGKTDLS. The disordered stretch occupies residues 402–423; that stretch reads PTSQLQSGKTDLSSVEPIVTMS.

It belongs to the G-protein coupled receptor 1 family. Highly expressed in the brain and spinal cord, and found in lower concentrations in the thymus and other tissues.

The protein resides in the cell membrane. In terms of biological role, G-protein coupled receptor for PEN, a neuropeptide produced from the precursor protein, proSAAS (encoded by PCSK1N). Acts through a G(i)- and G(q)-alpha-alpha-mediated pathway in response to PEN. Plays a role in food intake and body weight regulation. May contribute to the regulation of anxiety-related behaviors. The protein is G-protein coupled receptor 83 of Homo sapiens (Human).